The chain runs to 231 residues: 2-amino-5-formylamino-6-ribosylaminopyrimidin-4(3H)-one 5'-monophosphate deformylase (231 aa).

Glutamate 29, histidine 31, aspartate 40, and histidine 110 together coordinate Fe cation.

Belongs to the creatininase superfamily. FAPy deformylase family. As to quaternary structure, homodimer. The cofactor is Fe(2+). Zn(2+) is required as a cofactor.

It carries out the reaction 2-amino-5-formylamino-6-(5-phospho-D-ribosylamino)pyrimidin-4(3H)-one + H2O = 2,5-diamino-6-(1-D-ribosylamino)pyrimidin-4(3H)-one 5'-phosphate + formate + H(+). It participates in cofactor biosynthesis; coenzyme F420 biosynthesis. Its pathway is cofactor biosynthesis; riboflavin biosynthesis. Catalyzes the hydrolysis of the formamide of 2-amino-5-formylamino-6-ribosylamino-4(3H)-pyrimidinone 5'-monophosphate (FAPy) to form 2,5-diamino-6-ribosylamino-4(3H)-pyrimidinone 5'-phosphate (APy). This is 2-amino-5-formylamino-6-ribosylaminopyrimidin-4(3H)-one 5'-monophosphate deformylase from Methanothermobacter marburgensis (strain ATCC BAA-927 / DSM 2133 / JCM 14651 / NBRC 100331 / OCM 82 / Marburg) (Methanobacterium thermoautotrophicum).